A 341-amino-acid polypeptide reads, in one-letter code: Putative casein kinase I C03C10.2 (341 aa).

Residues 50 to 326 enclose the Protein kinase domain; sequence WSIEGVIGNG…KCLYSPKSLL (277 aa). Residues 56–64 and Lys-79 each bind ATP; that span reads IGNGGYGQI. The Proton acceptor role is filled by Asp-173.

It belongs to the protein kinase superfamily. CK1 Ser/Thr protein kinase family. Casein kinase I subfamily.

The catalysed reaction is L-seryl-[protein] + ATP = O-phospho-L-seryl-[protein] + ADP + H(+). It catalyses the reaction L-threonyl-[protein] + ATP = O-phospho-L-threonyl-[protein] + ADP + H(+). The chain is Putative casein kinase I C03C10.2 from Caenorhabditis elegans.